A 447-amino-acid polypeptide reads, in one-letter code: MGKYFGTDGVRGVANTELTPELAFKLGRIGGYVLTKDKENPKVLIGRDTRISGEMLEGALVAGLLSIGVEVMRLGVISTPGVAFLTKAVSASAGVMISASHNPVADNGIKFFGPDGFKLLDEQEKEIETLLDQEDALPRPTGADLGQANDYFEGAQKYLQFLKQTVDEDFTGIHIALDCANGAASSLAPHLFADLEADISTMGTSPNGKNINDGVGSTHPEALAAFVNAKNADIGLAFDGDADRLIAVDEKGNIVDGDKILYICAKYMKEKGLLKQQTLVTTVMSNLGLYKALEALQIDTKQTAVGDRYVMEEMRKGGYNLGGEQSGHIIFLDHITTGDGMLSALQLVNIMKQTGKKLSELAEEWETFPQTLVNIRVTDKHAVTDNEKVPAVIKEVEQEMNGEGRVLVRPSGTEPLVRIMVEAKTEELCDAFVNKIADVVKAELGQE.

Ser-100 functions as the Phosphoserine intermediate in the catalytic mechanism. Mg(2+) is bound by residues Ser-100, Asp-239, Asp-241, and Asp-243. Residue Ser-100 is modified to Phosphoserine.

The protein belongs to the phosphohexose mutase family. Mg(2+) is required as a cofactor. In terms of processing, activated by phosphorylation.

It catalyses the reaction alpha-D-glucosamine 1-phosphate = D-glucosamine 6-phosphate. In terms of biological role, catalyzes the conversion of glucosamine-6-phosphate to glucosamine-1-phosphate. In Halalkalibacterium halodurans (strain ATCC BAA-125 / DSM 18197 / FERM 7344 / JCM 9153 / C-125) (Bacillus halodurans), this protein is Phosphoglucosamine mutase.